The chain runs to 504 residues: Cytochrome P450 2S1 (504 aa).

Cysteine 440 lines the heme pocket.

This sequence belongs to the cytochrome P450 family. It depends on heme as a cofactor. Expressed at higher levels in extrahepatic tissues including trachea, lung, stomach, small intestine, colon, kidney, breast, placenta and spleen. Expressed in peripheral blood leukocytes. Constitutively expressed in skin (at protein level).

Its subcellular location is the endoplasmic reticulum membrane. It is found in the microsome membrane. It catalyses the reaction all-trans-retinoate + reduced [NADPH--hemoprotein reductase] + O2 = all-trans-5,6-epoxyretinoate + oxidized [NADPH--hemoprotein reductase] + H2O + H(+). The enzyme catalyses all-trans-retinoate + reduced [NADPH--hemoprotein reductase] + O2 = all-trans-4-hydroxyretinoate + oxidized [NADPH--hemoprotein reductase] + H2O + H(+). It carries out the reaction (5S)-hydroperoxy-(6E,8Z,11Z,14Z)-eicosatetraenoate = 5-oxo-(6E,8Z,11Z,14Z)-eicosatetraenoate + H2O. The catalysed reaction is (12S)-hydroperoxy-(5Z,8Z,10E,14Z)-eicosatetraenoate = 12-oxo-(5Z,8Z,10E,14Z)-eicosatetraenoate + H2O. It catalyses the reaction (15S)-hydroperoxy-(5Z,8Z,11Z,13E)-eicosatetraenoate = 15-oxo-(5Z,8Z,11Z,13E)-eicosatetraenoate + H2O. The enzyme catalyses prostaglandin H2 = thromboxane A2. It carries out the reaction prostaglandin H2 = (12S)-hydroxy-(5Z,8E,10E)-heptadecatrienoate + malonaldehyde. The catalysed reaction is (13S)-hydroperoxy-(9Z,11E)-octadecadienoate = 13-oxo-(9Z,11E)-octadecadienoate + H2O. It functions in the pathway lipid metabolism; fatty acid metabolism. Its function is as follows. A cytochrome P450 monooxygenase involved in the metabolism of retinoids and eicosanoids. In epidermis, may contribute to the oxidative metabolism of all-trans-retinoic acid. For this activity, uses molecular oxygen inserting one oxygen atom into a substrate, and reducing the second into a water molecule, with two electrons provided by NADPH via cytochrome P450 reductase (NADPH--hemoprotein reductase). Additionally, displays peroxidase and isomerase activities toward various oxygenated eicosanoids such as prostaglandin H2 (PGH2) and hydroperoxyeicosatetraenoates (HPETEs). Independently of cytochrome P450 reductase, NADPH, and O2, catalyzes the breakdown of PGH2 to hydroxyheptadecatrienoic acid (HHT) and malondialdehyde (MDA), which is known to act as a mediator of DNA damage. The polypeptide is Cytochrome P450 2S1 (Homo sapiens (Human)).